The primary structure comprises 154 residues: 3-dehydroquinate dehydratase (154 aa).

Tyrosine 26 functions as the Proton acceptor in the catalytic mechanism. Substrate-binding residues include asparagine 77, histidine 83, and aspartate 90. Catalysis depends on histidine 103, which acts as the Proton donor. Residues 104–105 (IS) and arginine 114 each bind substrate.

The protein belongs to the type-II 3-dehydroquinase family. As to quaternary structure, homododecamer.

The enzyme catalyses 3-dehydroquinate = 3-dehydroshikimate + H2O. Its pathway is metabolic intermediate biosynthesis; chorismate biosynthesis; chorismate from D-erythrose 4-phosphate and phosphoenolpyruvate: step 3/7. Functionally, catalyzes a trans-dehydration via an enolate intermediate. This is 3-dehydroquinate dehydratase from Buchnera aphidicola subsp. Baizongia pistaciae (strain Bp).